The primary structure comprises 299 residues: Taste receptor type 2 member 50 (299 aa).

Methionine 1 is a topological domain (extracellular). Residues 2–22 (ITFLYIFFSILIMVLFVLGNF) form a helical membrane-spanning segment. The Cytoplasmic portion of the chain corresponds to 23–55 (ANGFIALVNFIDWVKRKKISSADQILTALAVSR). The helical transmembrane segment at 56 to 76 (IGLLWTLLLNWYLTVLNPAFY) threads the bilayer. Topologically, residues 77-87 (SVELRITSYNA) are extracellular. The helical transmembrane segment at 88-108 (WVVTNHFSMWLAASLSIFYLL) threads the bilayer. The Cytoplasmic portion of the chain corresponds to 109 to 126 (KIANFSNLIFLHLKRRVR). The chain crosses the membrane as a helical span at residues 127–147 (SVILVILLGTLIFLVCHLLVA). Over 148–181 (NMDESMWAEEYEGNITGKMKLRNTVHLSYLTVTT) the chain is Extracellular. An N-linked (GlcNAc...) asparagine glycan is attached at asparagine 161. The chain crosses the membrane as a helical span at residues 182–202 (LWSFIPFTLSLISFLMLICSL). Residues 203–229 (CKHLKKMQLHGEGSQDLSTKVHIKALQ) are Cytoplasmic-facing. A helical transmembrane segment spans residues 230–250 (TLISFLLLCAIFFLFLIISVW). The Extracellular portion of the chain corresponds to 251 to 259 (SPRRLRNDP). A helical membrane pass occupies residues 260–280 (VVMVSKAVGNIYLAFDSFILI). Topologically, residues 281 to 299 (WRTKKLKHTFLLILCQIRC) are cytoplasmic.

Belongs to the G-protein coupled receptor T2R family.

It localises to the membrane. Functionally, receptor that may play a role in the perception of bitterness and is gustducin-linked. May play a role in sensing the chemical composition of the gastrointestinal content. The activity of this receptor may stimulate alpha gustducin, mediate PLC-beta-2 activation and lead to the gating of TRPM5. This chain is Taste receptor type 2 member 50 (TAS2R50), found in Pan paniscus (Pygmy chimpanzee).